A 340-amino-acid chain; its full sequence is uncharacterized protein (340 aa).

Residues 284 to 340 (DHSTPTNYQQETPASQQQLDQENEPIKPSKKSNSSSLPRGTTQPKSNSINRVSKLID) form a disordered region. Composition is skewed to polar residues over residues 286–303 (STPT…QQLD) and 320–334 (LPRG…SINR).

This is an uncharacterized protein from Mycoplasma genitalium (strain ATCC 33530 / DSM 19775 / NCTC 10195 / G37) (Mycoplasmoides genitalium).